The primary structure comprises 180 residues: Small ribosomal subunit protein uS5 (180 aa).

In terms of domain architecture, S5 DRBM spans 13-76; it reads LEERVVQINR…EAAKKNLIRV (64 aa).

It belongs to the universal ribosomal protein uS5 family. In terms of assembly, part of the 30S ribosomal subunit. Contacts proteins S4 and S8.

In terms of biological role, with S4 and S12 plays an important role in translational accuracy. Its function is as follows. Located at the back of the 30S subunit body where it stabilizes the conformation of the head with respect to the body. The chain is Small ribosomal subunit protein uS5 from Roseiflexus sp. (strain RS-1).